A 353-amino-acid polypeptide reads, in one-letter code: DNA replication and repair protein RecF (353 aa).

An ATP-binding site is contributed by 30 to 37 (GANGQGKT).

This sequence belongs to the RecF family.

The protein resides in the cytoplasm. In terms of biological role, the RecF protein is involved in DNA metabolism; it is required for DNA replication and normal SOS inducibility. RecF binds preferentially to single-stranded, linear DNA. It also seems to bind ATP. This Carboxydothermus hydrogenoformans (strain ATCC BAA-161 / DSM 6008 / Z-2901) protein is DNA replication and repair protein RecF.